Here is a 273-residue protein sequence, read N- to C-terminus: MNNRVHQGHLARKRFGQNFLNDQFVIDSIVSAINPQKGQAMVEIGPGLAALTEPVGERLDQLTVIELDRDLAARLQTHPFLGPKLTIYQQDAMTFNFGELAEKMGQPLRVFGNLPYNISTPLMFHLFSYTDAIADMHFMLQKEVVNRLVAGPNSKAYGRLSVMAQYYCNVIPVLEVPPSAFTPPPKVDSAVVRLVPHATMPHPVKDVRVLSRITTEAFNQRRKTIRNSLGNLFSVEVLTGMGLDPAMRAENISVAQYCQMANYLAENAPLQES.

S-adenosyl-L-methionine contacts are provided by N18, L20, G45, E66, D91, and N113.

The protein belongs to the class I-like SAM-binding methyltransferase superfamily. rRNA adenine N(6)-methyltransferase family. RsmA subfamily.

It localises to the cytoplasm. The enzyme catalyses adenosine(1518)/adenosine(1519) in 16S rRNA + 4 S-adenosyl-L-methionine = N(6)-dimethyladenosine(1518)/N(6)-dimethyladenosine(1519) in 16S rRNA + 4 S-adenosyl-L-homocysteine + 4 H(+). Its function is as follows. Specifically dimethylates two adjacent adenosines (A1518 and A1519) in the loop of a conserved hairpin near the 3'-end of 16S rRNA in the 30S particle. May play a critical role in biogenesis of 30S subunits. The protein is Ribosomal RNA small subunit methyltransferase A of Shigella boydii serotype 18 (strain CDC 3083-94 / BS512).